We begin with the raw amino-acid sequence, 243 residues long: Carboxy-S-adenosyl-L-methionine synthase (243 aa).

S-adenosyl-L-methionine is bound by residues Tyr-40, 65 to 67 (GCS), 90 to 91 (DN), 118 to 119 (DI), Asn-133, and Arg-200.

Belongs to the class I-like SAM-binding methyltransferase superfamily. Cx-SAM synthase family. As to quaternary structure, homodimer.

It carries out the reaction prephenate + S-adenosyl-L-methionine = carboxy-S-adenosyl-L-methionine + 3-phenylpyruvate + H2O. In terms of biological role, catalyzes the conversion of S-adenosyl-L-methionine (SAM) to carboxy-S-adenosyl-L-methionine (Cx-SAM). The chain is Carboxy-S-adenosyl-L-methionine synthase from Shewanella sediminis (strain HAW-EB3).